The sequence spans 589 residues: Ubiquilin-1 (589 aa).

Residues 1–11 (MAESGESGGPP) show a composition bias toward gly residues. Disordered regions lie at residues 1 to 35 (MAES…AEPK) and 110 to 145 (NRPQ…ATSN). Residue Ala-2 is modified to N-acetylalanine. Low complexity predominate over residues 12 to 35 (GSQDSAAGAEGAGAPAAAASAEPK). A Ubiquitin-like domain is found at 37–111 (MKVTVKTPKE…VHLVIKTQNR (75 aa)). Residues 110-124 (NRPQDHSAQQTNTAG) are compositionally biased toward polar residues. The span at 125–145 (SNVTTSSTPNSNSTSGSATSN) shows a compositional bias: low complexity. The interval 178 to 428 (QLLSNPEMMV…LNNPLFAGNP (251 aa)) is interaction with UBXN4. STI1 domains lie at 182-210 (NPEM…QLIM) and 212-251 (NPQM…MQEM). The disordered stretch occupies residues 295-371 (PFASLVSNTS…NLVPGVGASM (77 aa)). Positions 299 to 313 (LVSNTSSGEGSQPSR) are enriched in polar residues. Over residues 327-360 (QTSQSSSASSGTASTVGGTTGSTASGTSGQSTTA) the composition is skewed to low complexity. 2 STI1 domains span residues 387–434 (NPQL…QEQM) and 438–470 (LPTF…QQGL). The disordered stretch occupies residues 488-520 (LGALGSTGGSSGTNGSNATPSENTSPTAGTTEP). Gly residues predominate over residues 489–499 (GALGSTGGSSG). The span at 509–520 (ENTSPTAGTTEP) shows a compositional bias: polar residues. A UBA domain is found at 546-586 (RFQQQLEQLSAMGFLNREANLQALIATGGDINAAIERLLGS).

In terms of assembly, monomer and homodimer. Heterodimer with UBQLN2. Binds CD47, NBL1, GABRA1, GABRA2, GABRA3, GABRA6, GABRB1, GABRB2 and GABRB3. Binds UBE3A, BTRC, P4HB and MTOR. Interacts with the proteasome 19S subunit. Interacts (via ubiquitin-like domain) with TREX1; the interaction is direct and may control TREX1 subcellular location. Forms a complex with UBXN4 and VCP. Interacts (via UBA domain) with UBQLN4 (via ubiquitin-like domain). Found in a complex with UBQLN2 and MAP1LC3A/B/C. The monomeric form interacts with PSEN2. The monomeric form interacts with PSEN1. Interacts with ORAI1. Interacts (via UBA domain) with TICAM1. Interacts with EPS15. Interacts (via UBA domain) with UBA52 and (via ubiquitin-like domain) with PSMD3 and PSMD4. Interacts with HERPUD1. Interacts with MAP1LC3A/B/C in the presence of UBQLN4. Interacts (via ubiquitin-like domain) with EPS15 (via UIM domains) and both the ubiquitinated and non-ubiquitinated forms can interact with EPS15. Interacts (via ubiquitin-like domain) with EPS15L1, HGS (via UIM domain) and STAM2 (via UIM domain). Interacts with BCL2L10/BCL-B; in the cytoplasm. Monomeric form interacts with PSEN1. Post-translationally, degraded during both macroautophagy and during chaperone-mediated autophagy (CMA). Phosphorylated. In terms of processing, ubiquitinated. As to expression, brain (at protein level). Ubiquitous. Highly expressed throughout the brain; detected in neurons and in neuropathological lesions, such as neurofibrillary tangles and Lewy bodies. Highly expressed in heart, placenta, pancreas, lung, liver, skeletal muscle and kidney.

Its subcellular location is the cytoplasm. It is found in the nucleus. It localises to the endoplasmic reticulum. The protein resides in the cytoplasmic vesicle. The protein localises to the autophagosome. Its subcellular location is the cell membrane. Plays an important role in the regulation of different protein degradation mechanisms and pathways including ubiquitin-proteasome system (UPS), autophagy and endoplasmic reticulum-associated protein degradation (ERAD) pathway. Mediates the proteasomal targeting of misfolded or accumulated proteins for degradation by binding (via UBA domain) to their polyubiquitin chains and by interacting (via ubiquitin-like domain) with the subunits of the proteasome. Plays a role in the ERAD pathway via its interaction with ER-localized proteins UBXN4, VCP and HERPUD1 and may form a link between the polyubiquitinated ERAD substrates and the proteasome. Involved in the regulation of macroautophagy and autophagosome formation; required for maturation of autophagy-related protein LC3 from the cytosolic form LC3-I to the membrane-bound form LC3-II and may assist in the maturation of autophagosomes to autolysosomes by mediating autophagosome-lysosome fusion. Negatively regulates the TICAM1/TRIF-dependent toll-like receptor signaling pathway by decreasing the abundance of TICAM1 via the autophagic pathway. Promotes the ubiquitination and lysosomal degradation of ORAI1, consequently down-regulating the ORAI1-mediated Ca2+ mobilization. Suppresses the maturation and proteasomal degradation of amyloid beta A4 protein (A4) by stimulating the lysine 63 (K63)-linked polyubiquitination. Delays the maturation of A4 by sequestering it in the Golgi apparatus and preventing its transport to the cell surface for subsequent processing. Ubiquitinates BCL2L10 and thereby stabilizes protein abundance. In terms of biological role, plays a role in unfolded protein response (UPR) by attenuating the induction of UPR-inducible genes, DDTI3/CHOP, HSPA5 and PDIA2 during ER stress. Plays a key role in the regulation of the levels of PSEN1 by targeting its accumulation to aggresomes which may then be removed from cells by autophagocytosis. Its function is as follows. Plays a role in unfolded protein response (UPR) by attenuating the induction of UPR-inducible genes, DDTI3/CHOP, HSPA5 and PDIA2 during ER stress. The protein is Ubiquilin-1 (UBQLN1) of Homo sapiens (Human).